The chain runs to 306 residues: Ribonuclease HIII (306 aa).

An RNase H type-2 domain is found at 87–302 (WSVVGSDEVG…TKKAEALAKK (216 aa)). Positions 93, 94, and 196 each coordinate a divalent metal cation.

The protein belongs to the RNase HII family. RnhC subfamily. Mn(2+) serves as cofactor. Mg(2+) is required as a cofactor.

It is found in the cytoplasm. It catalyses the reaction Endonucleolytic cleavage to 5'-phosphomonoester.. Endonuclease that specifically degrades the RNA of RNA-DNA hybrids. In Exiguobacterium sibiricum (strain DSM 17290 / CCUG 55495 / CIP 109462 / JCM 13490 / 255-15), this protein is Ribonuclease HIII.